A 232-amino-acid polypeptide reads, in one-letter code: Flagellar L-ring protein (232 aa).

A signal peptide spans 1 to 21 (MQKYALHAYPVMALMVATLTG). C22 carries the N-palmitoyl cysteine lipid modification. C22 carries S-diacylglycerol cysteine lipidation.

This sequence belongs to the FlgH family. As to quaternary structure, the basal body constitutes a major portion of the flagellar organelle and consists of four rings (L,P,S, and M) mounted on a central rod.

The protein localises to the cell outer membrane. It is found in the bacterial flagellum basal body. Its function is as follows. Assembles around the rod to form the L-ring and probably protects the motor/basal body from shearing forces during rotation. This Salmonella choleraesuis (strain SC-B67) protein is Flagellar L-ring protein.